Reading from the N-terminus, the 188-residue chain is Protein GrpE (188 aa).

Residues 1–16 (MEERNEQVVEEVKEAQ) show a composition bias toward basic and acidic residues. The segment at 1 to 31 (MEERNEQVVEEVKEAQVEEAVTPENSEETVE) is disordered.

The protein belongs to the GrpE family. In terms of assembly, homodimer.

It localises to the cytoplasm. Participates actively in the response to hyperosmotic and heat shock by preventing the aggregation of stress-denatured proteins, in association with DnaK and GrpE. It is the nucleotide exchange factor for DnaK and may function as a thermosensor. Unfolded proteins bind initially to DnaJ; upon interaction with the DnaJ-bound protein, DnaK hydrolyzes its bound ATP, resulting in the formation of a stable complex. GrpE releases ADP from DnaK; ATP binding to DnaK triggers the release of the substrate protein, thus completing the reaction cycle. Several rounds of ATP-dependent interactions between DnaJ, DnaK and GrpE are required for fully efficient folding. This Bacillus cereus (strain G9842) protein is Protein GrpE.